An 87-amino-acid polypeptide reads, in one-letter code: Sec-independent protein translocase protein TatA (87 aa).

Residues 3 to 23 (IFGIGLPEMIVILVVALLIFG) form a helical membrane-spanning segment. Residues 61 to 87 (EGVKVSTSASEPEKVVDVSSATNTNKN) are disordered.

This sequence belongs to the TatA/E family. In terms of assembly, forms a complex with TatC.

The protein localises to the cell inner membrane. In terms of biological role, part of the twin-arginine translocation (Tat) system that transports large folded proteins containing a characteristic twin-arginine motif in their signal peptide across membranes. TatA could form the protein-conducting channel of the Tat system. The protein is Sec-independent protein translocase protein TatA of Trichodesmium erythraeum (strain IMS101).